Reading from the N-terminus, the 326-residue chain is Beta-ketoacyl-[acyl-carrier-protein] synthase III (326 aa).

Catalysis depends on residues C112 and H251. The tract at residues 252-256 is ACP-binding; sequence QANSR. N281 is an active-site residue.

It belongs to the thiolase-like superfamily. FabH family. Homodimer.

It is found in the cytoplasm. The enzyme catalyses malonyl-[ACP] + acetyl-CoA + H(+) = 3-oxobutanoyl-[ACP] + CO2 + CoA. Its pathway is lipid metabolism; fatty acid biosynthesis. Its function is as follows. Catalyzes the condensation reaction of fatty acid synthesis by the addition to an acyl acceptor of two carbons from malonyl-ACP. Catalyzes the first condensation reaction which initiates fatty acid synthesis and may therefore play a role in governing the total rate of fatty acid production. Possesses both acetoacetyl-ACP synthase and acetyl transacylase activities. Its substrate specificity determines the biosynthesis of branched-chain and/or straight-chain of fatty acids. The chain is Beta-ketoacyl-[acyl-carrier-protein] synthase III from Clostridium botulinum (strain Langeland / NCTC 10281 / Type F).